Consider the following 235-residue polypeptide: Phosphoribosylaminoimidazole-succinocarboxamide synthase (235 aa).

It belongs to the SAICAR synthetase family.

The enzyme catalyses 5-amino-1-(5-phospho-D-ribosyl)imidazole-4-carboxylate + L-aspartate + ATP = (2S)-2-[5-amino-1-(5-phospho-beta-D-ribosyl)imidazole-4-carboxamido]succinate + ADP + phosphate + 2 H(+). It functions in the pathway purine metabolism; IMP biosynthesis via de novo pathway; 5-amino-1-(5-phospho-D-ribosyl)imidazole-4-carboxamide from 5-amino-1-(5-phospho-D-ribosyl)imidazole-4-carboxylate: step 1/2. The sequence is that of Phosphoribosylaminoimidazole-succinocarboxamide synthase from Nautilia profundicola (strain ATCC BAA-1463 / DSM 18972 / AmH).